Reading from the N-terminus, the 197-residue chain is Phosphoheptose isomerase (197 aa).

The 161-residue stretch at 37 to 197 folds into the SIS domain; it reads MLQCLMNDGK…CIDSVLLEGM (161 aa). Position 52-54 (52-54) interacts with substrate; it reads NGG. Residues His-61 and Glu-65 each contribute to the Zn(2+) site. Substrate is bound by residues Glu-65, 94 to 95, 120 to 122, Ser-125, and Gln-175; these read ND and STS. 2 residues coordinate Zn(2+): Gln-175 and His-183.

The protein belongs to the SIS family. GmhA subfamily. Homotetramer. Zn(2+) serves as cofactor.

It is found in the cytoplasm. It carries out the reaction 2 D-sedoheptulose 7-phosphate = D-glycero-alpha-D-manno-heptose 7-phosphate + D-glycero-beta-D-manno-heptose 7-phosphate. Its pathway is carbohydrate biosynthesis; D-glycero-D-manno-heptose 7-phosphate biosynthesis; D-glycero-alpha-D-manno-heptose 7-phosphate and D-glycero-beta-D-manno-heptose 7-phosphate from sedoheptulose 7-phosphate: step 1/1. Functionally, catalyzes the isomerization of sedoheptulose 7-phosphate in D-glycero-D-manno-heptose 7-phosphate. The protein is Phosphoheptose isomerase of Neisseria gonorrhoeae (strain ATCC 700825 / FA 1090).